Consider the following 253-residue polypeptide: Hydroxyacylglutathione hydrolase (253 aa).

Zn(2+)-binding residues include His54, His56, Asp58, His59, His112, Asp131, and His169.

This sequence belongs to the metallo-beta-lactamase superfamily. Glyoxalase II family. Monomer. Requires Zn(2+) as cofactor.

It carries out the reaction an S-(2-hydroxyacyl)glutathione + H2O = a 2-hydroxy carboxylate + glutathione + H(+). The protein operates within secondary metabolite metabolism; methylglyoxal degradation; (R)-lactate from methylglyoxal: step 2/2. In terms of biological role, thiolesterase that catalyzes the hydrolysis of S-D-lactoyl-glutathione to form glutathione and D-lactic acid. This chain is Hydroxyacylglutathione hydrolase, found in Bartonella tribocorum (strain CIP 105476 / IBS 506).